The following is a 279-amino-acid chain: MADS-box transcription factor PHERES 1 (279 aa).

The MADS-box domain occupies 1–60; the sequence is MRGKMKLSFIENDSVRKTTFTKRKKGMLKKFNELVTLCGVDACAVIRSPYNSIQEPWPSR.

In terms of assembly, interacts with AGL61/DIANA and AGL62. As to expression, male gametophyte, embryo and endosperm.

Its subcellular location is the nucleus. Its function is as follows. Probable transcription factor involved in the development of gametophytes and seeds. In Arabidopsis thaliana (Mouse-ear cress), this protein is MADS-box transcription factor PHERES 1 (PHE1).